We begin with the raw amino-acid sequence, 454 residues long: Bifunctional protein GlmU (454 aa).

The pyrophosphorylase stretch occupies residues 1–228; sequence MTLPLHVVIL…PQDVEGANDP (228 aa). UDP-N-acetyl-alpha-D-glucosamine is bound by residues 10-13, K24, Q76, 81-82, 103-105, G138, E153, N168, and N226; these read LAAG, GT, and YGD. D105 contacts Mg(2+). N226 contacts Mg(2+). Residues 229–249 form a linker region; that stretch reads WQLAQLERAWQLRAARALCLQ. Positions 250–454 are N-acetyltransferase; that stretch reads GVRMADPARV…IEGWERPKKK (205 aa). Residues R332 and K350 each coordinate UDP-N-acetyl-alpha-D-glucosamine. The active-site Proton acceptor is H362. UDP-N-acetyl-alpha-D-glucosamine contacts are provided by Y365 and N376. Acetyl-CoA-binding positions include A379, 385-386, S404, A422, and R439; that span reads NY.

The protein in the N-terminal section; belongs to the N-acetylglucosamine-1-phosphate uridyltransferase family. In the C-terminal section; belongs to the transferase hexapeptide repeat family. As to quaternary structure, homotrimer. The cofactor is Mg(2+).

The protein localises to the cytoplasm. It catalyses the reaction alpha-D-glucosamine 1-phosphate + acetyl-CoA = N-acetyl-alpha-D-glucosamine 1-phosphate + CoA + H(+). The catalysed reaction is N-acetyl-alpha-D-glucosamine 1-phosphate + UTP + H(+) = UDP-N-acetyl-alpha-D-glucosamine + diphosphate. It functions in the pathway nucleotide-sugar biosynthesis; UDP-N-acetyl-alpha-D-glucosamine biosynthesis; N-acetyl-alpha-D-glucosamine 1-phosphate from alpha-D-glucosamine 6-phosphate (route II): step 2/2. It participates in nucleotide-sugar biosynthesis; UDP-N-acetyl-alpha-D-glucosamine biosynthesis; UDP-N-acetyl-alpha-D-glucosamine from N-acetyl-alpha-D-glucosamine 1-phosphate: step 1/1. The protein operates within bacterial outer membrane biogenesis; LPS lipid A biosynthesis. In terms of biological role, catalyzes the last two sequential reactions in the de novo biosynthetic pathway for UDP-N-acetylglucosamine (UDP-GlcNAc). The C-terminal domain catalyzes the transfer of acetyl group from acetyl coenzyme A to glucosamine-1-phosphate (GlcN-1-P) to produce N-acetylglucosamine-1-phosphate (GlcNAc-1-P), which is converted into UDP-GlcNAc by the transfer of uridine 5-monophosphate (from uridine 5-triphosphate), a reaction catalyzed by the N-terminal domain. This Xanthomonas campestris pv. campestris (strain 8004) protein is Bifunctional protein GlmU.